A 75-amino-acid chain; its full sequence is Pi-hexatoxin-Hi1d (75 aa).

6 disulfides stabilise this stretch: Cys-3/Cys-18, Cys-10/Cys-23, Cys-17/Cys-33, Cys-40/Cys-55, Cys-47/Cys-60, and Cys-54/Cys-71. Domain repeat units lie at residues 3–33 (CIRKWLSCVDRKNDCCEGLECYKRRHSFEVC) and 40–71 (CLVKWKQCDGRERDCCAGLECWKRSGNKSSVC). The tract at residues 3–71 (CIRKWLSCVD…KRSGNKSSVC (69 aa)) is 2 X approximate repeats with cysteine pattern C-C-CC-C-C.

This sequence belongs to the psalmotoxin-1 family. Double-knot toxin subfamily. In terms of tissue distribution, expressed by the venom gland.

The protein resides in the secreted. This toxin potently and selectively inhibits ASIC1a, an isoform of the gene ASIC1. It incompletely inhibits ASIC1a activation in a pH-independent and slowly reversible manner. This toxin acts by binding to and stabilizing the closed state of the channel, thereby impeding the transition into a conducting state. This toxin may bind to the acidic pocket of ASIC1a, since mutation of a key residue of this pocket (Arg-350) abolishes the ability of the toxin to inhibit ASIC1a. In vivo, this toxin protects the brain from neuronal injury when administered up to 8 hours after stroke onset. The chain is Pi-hexatoxin-Hi1d from Hadronyche infensa (Fraser island funnel-web spider).